A 500-amino-acid polypeptide reads, in one-letter code: Tektin-like protein 1 (500 aa).

The stretch at 198–229 forms a coiled coil; it reads MLTWEKEELKSMKRKMEADMEKSEALLKTLAS. Residue Tyr-372 is modified to Phosphotyrosine. Positions 420–444 form a coiled coil; that stretch reads DKLQRHISHVEKNLDELLSMRKKLT.

In terms of assembly, microtubule inner protein component of sperm flagellar doublet microtubules.

It localises to the cytoplasm. It is found in the cytoskeleton. The protein localises to the flagellum axoneme. Its function is as follows. Microtubule inner protein (MIP) part of the dynein-decorated doublet microtubules (DMTs) in sperm flagellar axoneme, which is required for motile flagellum beating. Forms an extensive interaction network cross-linking the lumen of axonemal doublet microtubules. The polypeptide is Tektin-like protein 1 (Bos taurus (Bovine)).